The primary structure comprises 582 residues: Proline--tRNA ligase (582 aa).

The protein belongs to the class-II aminoacyl-tRNA synthetase family. ProS type 1 subfamily. In terms of assembly, homodimer.

It is found in the cytoplasm. It catalyses the reaction tRNA(Pro) + L-proline + ATP = L-prolyl-tRNA(Pro) + AMP + diphosphate. Its function is as follows. Catalyzes the attachment of proline to tRNA(Pro) in a two-step reaction: proline is first activated by ATP to form Pro-AMP and then transferred to the acceptor end of tRNA(Pro). As ProRS can inadvertently accommodate and process non-cognate amino acids such as alanine and cysteine, to avoid such errors it has two additional distinct editing activities against alanine. One activity is designated as 'pretransfer' editing and involves the tRNA(Pro)-independent hydrolysis of activated Ala-AMP. The other activity is designated 'posttransfer' editing and involves deacylation of mischarged Ala-tRNA(Pro). The misacylated Cys-tRNA(Pro) is not edited by ProRS. This chain is Proline--tRNA ligase, found in Mycobacterium tuberculosis (strain CDC 1551 / Oshkosh).